The following is a 274-amino-acid chain: Hydroxyethylthiazole kinase (274 aa).

Residue M54 participates in substrate binding. R129 and T175 together coordinate ATP. G202 serves as a coordination point for substrate.

The protein belongs to the Thz kinase family. Mg(2+) serves as cofactor.

The enzyme catalyses 5-(2-hydroxyethyl)-4-methylthiazole + ATP = 4-methyl-5-(2-phosphooxyethyl)-thiazole + ADP + H(+). It participates in cofactor biosynthesis; thiamine diphosphate biosynthesis; 4-methyl-5-(2-phosphoethyl)-thiazole from 5-(2-hydroxyethyl)-4-methylthiazole: step 1/1. Catalyzes the phosphorylation of the hydroxyl group of 4-methyl-5-beta-hydroxyethylthiazole (THZ). The protein is Hydroxyethylthiazole kinase of Granulibacter bethesdensis (strain ATCC BAA-1260 / CGDNIH1).